Consider the following 99-residue polypeptide: Nucleoid-associated protein SUB1611 (99 aa).

Belongs to the YbaB/EbfC family. Homodimer.

The protein localises to the cytoplasm. The protein resides in the nucleoid. Binds to DNA and alters its conformation. May be involved in regulation of gene expression, nucleoid organization and DNA protection. The protein is Nucleoid-associated protein SUB1611 of Streptococcus uberis (strain ATCC BAA-854 / 0140J).